The chain runs to 215 residues: 5'-deoxynucleotidase YGK1 (215 aa).

In terms of domain architecture, HD spans 58–164 (ISDHMYRMGL…VKDIDKYEML (107 aa)). Residues His61, His89, Asp90, Glu93, Asp98, Ile99, and Asp159 each contribute to the a divalent metal cation site.

It belongs to the HDDC2 family. In terms of assembly, homodimer. Mn(2+) serves as cofactor. Requires Co(2+) as cofactor. The cofactor is Mg(2+).

The catalysed reaction is a 2'-deoxyribonucleoside 5'-phosphate + H2O = a 2'-deoxyribonucleoside + phosphate. Its function is as follows. Catalyzes the dephosphorylation of the nucleoside 5'-monophosphates deoxyadenosine monophosphate (dAMP), deoxycytidine monophosphate (dCMP), deoxyguanosine monophosphate (dGMP) and deoxythymidine monophosphate (dTMP). The chain is 5'-deoxynucleotidase YGK1 from Saccharomyces cerevisiae (strain ATCC 204508 / S288c) (Baker's yeast).